The sequence spans 413 residues: Multidrug resistance protein MdtA (413 aa).

Positions 1–25 are cleaved as a signal peptide; it reads MKNKRRTYFFQFAVLAVVIATAYFA. The segment at 394-413 is disordered; that stretch reads ANTYDQMDKSKPSNSKVENT.

This sequence belongs to the membrane fusion protein (MFP) (TC 8.A.1) family. As to quaternary structure, part of a tripartite efflux system composed of MdtA, MdtB and MdtC.

It localises to the cell inner membrane. The protein is Multidrug resistance protein MdtA of Xenorhabdus bovienii (strain SS-2004) (Xenorhabdus nematophila subsp. bovienii).